Consider the following 81-residue polypeptide: Albumin-1 (81 aa).

A propeptide spanning residues 27–34 is cleaved from the precursor; it reads LSSVAKMI.

Post-translationally, three disulfide bonds are probably present. The C-terminal glycine may be removed from A1b.

Its function is as follows. A1b binds to basic 7S globulin (BG) and stimulates its phosphorylation activity. The chain is Albumin-1 (LEG1) from Lupinus angustifolius (Narrow-leaved blue lupine).